The sequence spans 336 residues: MAELKLGYKASAEQFAPRELVELAVAAEAHGMDSATVSDHFQPWRHQGGHAPFSLSWMTAVGERTNRLLLGTSVLTPTFRYNPAVIAQAFATMGCLYPNRVFLGVGTGEALNEIATGYEGAWPEFKERFARLRESVGLMRQLWSGDRVDFDGDYYRLKGASIYDVPDGGVPVYIAAGGPAVAKYAGRAGDGFICTSGKGEELYTEKLMPAVREGAAAADRSVDGIDKMIEIKISYDPDPELALNNTRFWAPLSLTAEQKHSIDDPIEMEKAADALPIEQIAKRWIVASDPDEAVEKVGQYVTWGLNHLVFHAPGHDQRRFLELFQSDLAPRLRRLG.

Asp-39 provides a ligand contact to coenzyme F420-(gamma-Glu)n. The active-site Proton donor is His-40. Residues Thr-76 and 107 to 108 contribute to the coenzyme F420-(gamma-Glu)n site; that span reads TG. Glu-109 functions as the Proton acceptor in the catalytic mechanism. Residues Asn-112, 177-178, and 180-181 each bind coenzyme F420-(gamma-Glu)n; these read GG and AV. Substrate-binding residues include Thr-195, Lys-198, Lys-259, and Arg-283.

This sequence belongs to the F420-dependent glucose-6-phosphate dehydrogenase family. Homodimer.

It carries out the reaction oxidized coenzyme F420-(gamma-L-Glu)(n) + D-glucose 6-phosphate + H(+) = 6-phospho-D-glucono-1,5-lactone + reduced coenzyme F420-(gamma-L-Glu)(n). Its function is as follows. Catalyzes the coenzyme F420-dependent oxidation of glucose 6-phosphate (G6P) to 6-phosphogluconolactone. Appears to have a role in resistance to oxidative stress, via its consumption of G6P that serves as a source of reducing power to combat oxidative stress in mycobacteria. More precisely, is likely involved in a F420-dependent anti-oxidant mechanism that protects M.tuberculosis against oxidative stress and bactericidal agents. Functionally, is essential for the bioreductive activation of the bicyclic 4-nitroimidazole prodrug PA-824 (nitroimidazo-oxazine) developed for anti-tuberculosis therapy against both replicating and persistent bacteria. It does not interact directly with PA-824 but, rather, provides reduced F420 to the deazaflavin-dependent nitroreductase Ddn, which in turn activates PA-824. The chain is F420-dependent glucose-6-phosphate dehydrogenase (fgd1) from Mycobacterium tuberculosis (strain CDC 1551 / Oshkosh).